A 355-amino-acid polypeptide reads, in one-letter code: Uroporphyrinogen decarboxylase (355 aa).

Residues 27–31 (RQAGR), D77, Y154, T209, and H327 contribute to the substrate site.

This sequence belongs to the uroporphyrinogen decarboxylase family. In terms of assembly, homodimer.

It is found in the cytoplasm. It catalyses the reaction uroporphyrinogen III + 4 H(+) = coproporphyrinogen III + 4 CO2. The protein operates within porphyrin-containing compound metabolism; protoporphyrin-IX biosynthesis; coproporphyrinogen-III from 5-aminolevulinate: step 4/4. Catalyzes the decarboxylation of four acetate groups of uroporphyrinogen-III to yield coproporphyrinogen-III. The polypeptide is Uroporphyrinogen decarboxylase (Pseudoalteromonas atlantica (strain T6c / ATCC BAA-1087)).